We begin with the raw amino-acid sequence, 569 residues long: DNA-binding protein eta2 (569 aa).

2 disordered regions span residues 1 to 26 (MMLA…TLSC) and 133 to 159 (KRKI…AKKR). Polar residues predominate over residues 9–26 (INENQGTRSNLESPTLSC). A Phosphoserine modification is found at Ser21. Myb-like domains are found at residues 322-371 (LDPK…RFVV) and 377-459 (ETID…EKTI). Residues 459-487 (IASYSSNQRQEEDQGKKRKKRKKKKSKGK) are disordered. Over residues 474 to 487 (KKRKKRKKKKSKGK) the composition is skewed to basic residues.

It localises to the nucleus. This is DNA-binding protein eta2 (eta2) from Schizosaccharomyces pombe (strain 972 / ATCC 24843) (Fission yeast).